The chain runs to 249 residues: Aquaporin TIP2-1 (249 aa).

The next 2 membrane-spanning stretches (helical) occupy residues 20 to 40 (AYVA…GSAI) and 54 to 74 (AGLV…VSVA). The NPA 1 signature appears at 83-85 (NPA). The next 3 helical transmembrane spans lie at 102–122 (VFYW…LGFV), 141–161 (GVVF…ATAA), and 168–188 (LGTI…LAAG). Residues 196-198 (NPA) carry the NPA 2 motif. A helical transmembrane segment spans residues 217-237 (WVGPLVGGGLAGLVYGDVFIG).

Belongs to the MIP/aquaporin (TC 1.A.8) family. TIP (TC 1.A.8.10) subfamily.

The protein resides in the vacuole membrane. Its function is as follows. Aquaporins facilitate the transport of water and small neutral solutes across cell membranes. The protein is Aquaporin TIP2-1 (TIP2-1) of Zea mays (Maize).